The following is a 293-amino-acid chain: MDGVIVIDKPEGWTSHDVVNKVRRIAKTKKVGHLGTLDPIATGVLPLVIERATRLAQFYTRSEKIYEGLVRFGWSTSSYDRAGEPTSEKVEVQLTAEQLEHALENFRGEFLQRPPAVSAKKVEGKRSYELARKNMAVELEPVKVHVYELTLLALEGNLARLRAHCSGGTYMRSIAHDLGQALGCGAHLQELRRLASGEFELDQARTLEQLESLAAEDRLPDAIVPAGKLLPAFPSVFVDEITAAQIRNGRDFPASPFRSQPASKYVKAVTRTGDLVAIGEVVLPNLYHPTVVM.

Residue Asp-38 is the Nucleophile of the active site.

Belongs to the pseudouridine synthase TruB family. Type 1 subfamily.

The enzyme catalyses uridine(55) in tRNA = pseudouridine(55) in tRNA. Functionally, responsible for synthesis of pseudouridine from uracil-55 in the psi GC loop of transfer RNAs. This Solibacter usitatus (strain Ellin6076) protein is tRNA pseudouridine synthase B.